A 167-amino-acid polypeptide reads, in one-letter code: Transcription antitermination protein NusB (167 aa).

The segment at Met-1–Asn-21 is disordered.

The protein belongs to the NusB family.

In terms of biological role, involved in transcription antitermination. Required for transcription of ribosomal RNA (rRNA) genes. Binds specifically to the boxA antiterminator sequence of the ribosomal RNA (rrn) operons. In Nitrosomonas eutropha (strain DSM 101675 / C91 / Nm57), this protein is Transcription antitermination protein NusB.